A 340-amino-acid polypeptide reads, in one-letter code: Uroporphyrinogen decarboxylase (340 aa).

Substrate contacts are provided by residues 21-25 (RQAGR), F40, D71, Y148, S203, and H316.

This sequence belongs to the uroporphyrinogen decarboxylase family. In terms of assembly, homodimer.

It localises to the cytoplasm. The enzyme catalyses uroporphyrinogen III + 4 H(+) = coproporphyrinogen III + 4 CO2. It functions in the pathway porphyrin-containing compound metabolism; protoporphyrin-IX biosynthesis; coproporphyrinogen-III from 5-aminolevulinate: step 4/4. Catalyzes the decarboxylation of four acetate groups of uroporphyrinogen-III to yield coproporphyrinogen-III. This chain is Uroporphyrinogen decarboxylase, found in Campylobacter jejuni subsp. jejuni serotype O:2 (strain ATCC 700819 / NCTC 11168).